Consider the following 1177-residue polypeptide: Phospholipid-transporting ATPase IF (1177 aa).

Over Met1 to Val55 the chain is Cytoplasmic. The chain crosses the membrane as a helical span at residues Pro56–Val77. At Gln78–Asp82 the chain is on the extracellular side. Residues Thr83–Lys104 traverse the membrane as a helical segment. At Gln105 to Phe289 the chain is on the cytoplasmic side. A helical membrane pass occupies residues Leu290–Trp311. Residues Gln312 to Asp341 lie on the Extracellular side of the membrane. The chain crosses the membrane as a helical span at residues Phe342 to Val359. Residues Thr360–Ala876 are Cytoplasmic-facing. Catalysis depends on Asp407, which acts as the 4-aspartylphosphate intermediate. ATP-binding residues include Asp407, Lys408, Thr409, Glu531, Phe572, Lys595, Arg626, Thr706, Gly707, Asp708, Arg794, and Lys800. A Mg(2+)-binding site is contributed by Asp407. Thr409 serves as a coordination point for Mg(2+). Position 821 (Asp821) interacts with Mg(2+). ATP is bound by residues Asn824 and Asp825. Asp825 contributes to the Mg(2+) binding site. Residues Thr877–Phe898 traverse the membrane as a helical segment. Topologically, residues Tyr899–Ser910 are extracellular. The helical transmembrane segment at Val911–Leu930 threads the bilayer. Over Leu931–Thr960 the chain is Cytoplasmic. The helical transmembrane segment at Phe961 to Leu982 threads the bilayer. The Extracellular segment spans residues Ile983–Gly997. The helical transmembrane segment at Asn998 to Glu1020 threads the bilayer. The Cytoplasmic portion of the chain corresponds to Thr1021 to Thr1025. Residues Trp1026–Gly1047 traverse the membrane as a helical segment. The Extracellular segment spans residues Gly1048–Gln1065. Residues Leu1066–Lys1090 traverse the membrane as a helical segment. Over Lys1091–Cys1177 the chain is Cytoplasmic. Residue Ser1154 is modified to Phosphoserine.

This sequence belongs to the cation transport ATPase (P-type) (TC 3.A.3) family. Type IV subfamily. In terms of assembly, component of a P4-ATPase flippase complex which consists of a catalytic alpha subunit ATP11B and an accessory beta subunit TMEM30A. Mg(2+) is required as a cofactor.

It localises to the recycling endosome membrane. The protein resides in the early endosome. It is found in the endoplasmic reticulum. The protein localises to the golgi apparatus. Its subcellular location is the trans-Golgi network. It carries out the reaction ATP + H2O + phospholipidSide 1 = ADP + phosphate + phospholipidSide 2.. It catalyses the reaction a 1,2-diacyl-sn-glycero-3-phospho-L-serine(out) + ATP + H2O = a 1,2-diacyl-sn-glycero-3-phospho-L-serine(in) + ADP + phosphate + H(+). The enzyme catalyses a 1,2-diacyl-sn-glycero-3-phosphoethanolamine(out) + ATP + H2O = a 1,2-diacyl-sn-glycero-3-phosphoethanolamine(in) + ADP + phosphate + H(+). With respect to regulation, the ATPase activity is up-regulated by aminophospholipids PS and PE. Functionally, catalytic component of a P4-ATPase flippase complex which catalyzes the hydrolysis of ATP coupled to the transport of aminophospholipids, phosphatidylserines (PS) and phosphatidylethanolamines (PE), from the outer to the inner leaflet of intracellular membranes. May contribute to the maintenance of membrane lipid asymmetry in endosome compartment. The chain is Phospholipid-transporting ATPase IF (ATP11B) from Homo sapiens (Human).